A 636-amino-acid chain; its full sequence is Asparagine synthetase domain-containing protein 1 (636 aa).

The Nucleophile role is filled by Cys-2. In terms of domain architecture, Glutamine amidotransferase type-2 spans 2 to 187 (CGICCVVALS…ASGIFKMDLR (186 aa)). In terms of domain architecture, Asparagine synthetase spans 291-607 (QFIDVLDEAV…GLEAASILPK (317 aa)).

The polypeptide is Asparagine synthetase domain-containing protein 1 (ASNSD1) (Gallus gallus (Chicken)).